We begin with the raw amino-acid sequence, 494 residues long: MFKFAAAVILCLVAASSTLAQHNPHWWGNRNTIVHLFEWKWSDIAAECESFLGPRGFAGVQVSPVNENIISAGRPWWERYQPISYKLVTRSGNEQEFADMVRRCNDVGVRIYVDVLLNHMSGDFDGIAVGTAGSEAEPSKKSYPGVPYSALDFHPTCEITDWNDRFQVQQCELVGLKDLDQSSEWVRSKLIEFLDHLIELGVAGFRVDAAKHMAADDLSYIYSSISDLNIEHGFPHNARPFIFQEVIDHGHETVSREEYNQLGAVTEFRFSEEIGNAFRGNNALKWLQSWGTGWGFLPSGQALTFVDNHDNQRDMGAVLNYKSPKQYKMATAFHLAYPYGISRVMSSFAFDDHDTAPPQDEQERIISPEFDEEGACVNGWICEHRWRQIYAMVGFKNAVRDTELSNWWDNGDNQISFCRGNKGFLAVNNNLYDLSRELQTCLPAGVYCDVISGSLIDGSCTGKSVTVDGNGYGYIHIGSDDFDGVLALHVDARI.

The N-terminal stretch at methionine 1–alanine 20 is a signal peptide. Position 21 is a pyrrolidone carboxylic acid (glutamine 21). A disulfide bridge connects residues cysteine 48 and cysteine 104. Residues asparagine 118, glutamine 169, and aspartate 178 each contribute to the Ca(2+) site. A disulfide bond links cysteine 157 and cysteine 171. Position 206 (arginine 206) interacts with chloride. Catalysis depends on aspartate 208, which acts as the Nucleophile. Histidine 212 serves as a coordination point for Ca(2+). The Proton donor role is filled by glutamate 245. Asparagine 308 and arginine 343 together coordinate chloride. Intrachain disulfides connect cysteine 376–cysteine 382, cysteine 418–cysteine 441, and cysteine 448–cysteine 460.

The protein belongs to the glycosyl hydrolase 13 family. Monomer. Requires Ca(2+) as cofactor. Chloride is required as a cofactor.

It is found in the secreted. It catalyses the reaction Endohydrolysis of (1-&gt;4)-alpha-D-glucosidic linkages in polysaccharides containing three or more (1-&gt;4)-alpha-linked D-glucose units.. The sequence is that of Alpha-amylase-related protein (Amyrel) from Drosophila atripex (Fruit fly).